The following is a 533-amino-acid chain: NAD(P)H-quinone oxidoreductase chain 4 1 (533 aa).

The next 14 helical transmembrane spans lie at phenylalanine 6 to isoleucine 26, tyrosine 37 to phenylalanine 57, leucine 87 to tryptophan 107, proline 113 to alanine 133, methionine 137 to tryptophan 157, phenylalanine 169 to phenylalanine 189, tryptophan 209 to phenylalanine 229, asparagine 243 to isoleucine 263, phenylalanine 277 to phenylalanine 297, isoleucine 311 to glycine 331, alanine 332 to valine 352, phenylalanine 376 to valine 396, valine 417 to leucine 437, and leucine 461 to threonine 481.

The protein belongs to the complex I subunit 4 family.

The protein localises to the cellular thylakoid membrane. It catalyses the reaction a plastoquinone + NADH + (n+1) H(+)(in) = a plastoquinol + NAD(+) + n H(+)(out). The enzyme catalyses a plastoquinone + NADPH + (n+1) H(+)(in) = a plastoquinol + NADP(+) + n H(+)(out). NDH-1 shuttles electrons from NAD(P)H, via FMN and iron-sulfur (Fe-S) centers, to quinones in the respiratory chain. The immediate electron acceptor for the enzyme in this species is believed to be plastoquinone. Couples the redox reaction to proton translocation (for every two electrons transferred, four hydrogen ions are translocated across the cytoplasmic membrane), and thus conserves the redox energy in a proton gradient. The sequence is that of NAD(P)H-quinone oxidoreductase chain 4 1 from Synechococcus elongatus (strain ATCC 33912 / PCC 7942 / FACHB-805) (Anacystis nidulans R2).